The primary structure comprises 424 residues: Probable threonylcarbamoyladenosine tRNA methylthiotransferase (424 aa).

Residues 4–115 (IRVYIETFGC…APQAVRAASN (112 aa)) enclose the MTTase N-terminal domain. C13, C48, C79, C150, C154, and C157 together coordinate [4Fe-4S] cluster. Positions 136-365 (RSNPLIHIIP…EELKMRITEE (230 aa)) constitute a Radical SAM core domain. One can recognise a TRAM domain in the interval 368 to 424 (RRLVGSFQEILVVERGRKGGFIGRTGSYIPVVTETGEPGSFRRVRIRDATGTYLLAD).

This sequence belongs to the methylthiotransferase family. CDKAL1 subfamily. The cofactor is [4Fe-4S] cluster.

It carries out the reaction N(6)-L-threonylcarbamoyladenosine(37) in tRNA + (sulfur carrier)-SH + AH2 + 2 S-adenosyl-L-methionine = 2-methylsulfanyl-N(6)-L-threonylcarbamoyladenosine(37) in tRNA + (sulfur carrier)-H + 5'-deoxyadenosine + L-methionine + A + S-adenosyl-L-homocysteine + 2 H(+). Functionally, catalyzes the methylthiolation of N6-threonylcarbamoyladenosine (t(6)A), leading to the formation of 2-methylthio-N6-threonylcarbamoyladenosine (ms(2)t(6)A) at position 37 in tRNAs that read codons beginning with adenine. The chain is Probable threonylcarbamoyladenosine tRNA methylthiotransferase from Methanothermobacter thermautotrophicus (strain ATCC 29096 / DSM 1053 / JCM 10044 / NBRC 100330 / Delta H) (Methanobacterium thermoautotrophicum).